We begin with the raw amino-acid sequence, 185 residues long: Elongation factor P (185 aa).

It belongs to the elongation factor P family.

It is found in the cytoplasm. It functions in the pathway protein biosynthesis; polypeptide chain elongation. Its function is as follows. Involved in peptide bond synthesis. Stimulates efficient translation and peptide-bond synthesis on native or reconstituted 70S ribosomes in vitro. Probably functions indirectly by altering the affinity of the ribosome for aminoacyl-tRNA, thus increasing their reactivity as acceptors for peptidyl transferase. This Trichormus variabilis (strain ATCC 29413 / PCC 7937) (Anabaena variabilis) protein is Elongation factor P.